Reading from the N-terminus, the 1110-residue chain is MAGLQQGCHPEGQDWTAPHWKTCRPCQGPRGLTVRHLRTVSSISVFSVVFWGVLLWADSLSLPAWARETFTLGVLGPWDCDPIFAQALPSMATQLAVDRVNQDASLLLGSQLDFKILPTGCDTPHALATFVAHRNTVAAFIGPVNPGYCPAAALLAQGWGKSLFSWACGAPEGGGALVPTLPSMADVLLSVMRHFGWARLAIVSSHQDIWVTTAQQLATAFRAHGLPIGLITSLGPGEKGATEVCKQLHSVHGLKIVVLCMHSALLGGLEQTVLLRCARKEGLTDGRLVFLPYDTLLFALPYRNRSYLVLDDDGPLQEAYDAVLTISLDTSPESHAFTATKMRGGTAANLGPEQVSPLFGTIYDAVILLAHALNHSEAHGTGLSGAHLGNHIRALDVAGFSQRIRIDGKGRRLPQYVILDTNGEGSQLVPTHILDVSTQQVQPLGTAVHFPGGSPPARDASCWFDPNTLCIRGVQPLGSLLTLTITCVLALVGGFLAYFIRLGLQQLRLLRGPHRILLTPQELTFLQRTPSRRRPHVDSGSESRSVVDGGSPQSVIQGSTRSVPAFLEHTNVALYQGEWVWLKKFEAGTAPDLRPSSLSLLRKMREMRHENVTAFLGLFVGPEVSAMVLEHCARGSLEDLLRNEDLRLDWTFKASLLLDLIRGLRYLHHRHFPHGRLKSRNCVVDTRFVLKITDHGYAEFLESHCSFRPQPAPEELLWTAPELLRGPRRPWGPGKATFKGDVFSLGIILQEVLTRDPPYCSWGLSAEEIIRKVASPPPLCRPLVSPDQGPLECIQLMQLCWEEAPDDRPSLDQIYTQFKSINQGKKTSVADSMLRMLEKYSQSLEGLVQERTEELELERRKTERLLSQMLPPSVAHALKMGTTVEPEYFDQVTIYFSDIVGFTTISALSEPIEVVGFLNDLYTMFDAVLDSHDVYKVETIGDAYMVASGLPRRNGNRHAAEIANMALEILSYAGNFRMRHAPDVPIRVRAGLHSGPCVAGVVGLTMPRYCLFGDTVNTASRMESTGLPYRIHVSRNTVQALLSLDEGYKIDVRGQTELKGKGLEETYWLTGKTGFCRSLPTPLSIQPGDPWQDHINQEIRTGFAKLARVG.

The signal sequence occupies residues 1–66 (MAGLQQGCHP…ADSLSLPAWA (66 aa)). The Extracellular segment spans residues 67 to 475 (RETFTLGVLG…PNTLCIRGVQ (409 aa)). C121 and C149 are disulfide-bonded. N-linked (GlcNAc...) asparagine glycosylation is found at N304 and N374. A helical membrane pass occupies residues 476–500 (PLGSLLTLTITCVLALVGGFLAYFI). Residues 501 to 1110 (RLGLQQLRLL…TGFAKLARVG (610 aa)) lie on the Cytoplasmic side of the membrane. The tract at residues 529–556 (TPSRRRPHVDSGSESRSVVDGGSPQSVI) is disordered. The Protein kinase domain maps to 541–818 (SESRSVVDGG…PSLDQIYTQF (278 aa)). The segment at 880–921 (MGTTVEPEYFDQVTIYFSDIVGFTTISALSEPIEVVGFLNDL) is interaction with NCALD. Positions 893–1023 (TIYFSDIVGF…DTVNTASRME (131 aa)) constitute a Guanylate cyclase domain.

This sequence belongs to the adenylyl cyclase class-4/guanylyl cyclase family. As to quaternary structure, interacts (via the catalytic domain) with NCALD. As to expression, specifically expressed in a subpopulation of olfactory sensory neurons. Expressed in the cilia of the olfactory epithelium.

The protein localises to the cell projection. It is found in the cilium membrane. It carries out the reaction GTP = 3',5'-cyclic GMP + diphosphate. Activated by Ca(2+). Activated by NCALD in a Ca(2+)-dependent fashion. Functionally, functions as an olfactory receptor activated by a urine odorant, uroguanylin. Activated as well by the volatile semiochemicals carbon disulfide (CS2) and carbon dioxide (CO2). Has guanylate cyclase activity upon binding of the ligand. Activation of GUCY2D neurons leads to the cGMP-dependent activation of the CNGA3 channels, membrane depolarization and an increase in action potential frequency. Signaling pathways activated by GUCY2D may trigger social behaviors such as acquisition of food preference. This chain is Guanylate cyclase 2D (Gucy2d), found in Rattus norvegicus (Rat).